The primary structure comprises 550 residues: MPQLNSGXGDELGANDELIRFKDEGEQEEKSPGEGSAEGDLADVKSSLVNESENHSSDSDSEVERRPPPRETFEKPRDYLSEAFRRQQDAAFFKGPPYAGYPFLMIPDLGGITCPMVPSHPALAYLQMKWPLLDSPSTAGLKDARSPSPAHLSNKVPVVQHPHHMHPLTPLITYSNEHFSPGTPPGHLSPEIDPKTGIPRPPHPSELSPYYPLSPGAVGQIPHPLGWLVPQQGQPMYSIPPGGFRHPYPALAMNASMSSLVSSRFSPHMVPPPHHSLHTSGIPHPAIVSPIVKQEPSSGNISPNLSMKSNVVVKKEEEKKPHIKKPLNAFMLYMKEMRAKVVAECTLKESAAINQILGRRWHSLSREEQAKYYELARKERQLHSQLYPSWSARDNYGKKKKRKREKQSPEMENYTKTKKMCVQHFPSDKSCDSPASSHGSMLDSPATPSAALASPREPAATHSEEAQPLSLTTKPEARALSHSAAFLASKSPSSSSLSGHLPSPVGSPLLSRPIPLTSSILSPPGVFPPALQALPLLQAQPLPLVARSSD.

Residues 1–61 (MPQLNSGXGD…SENHSSDSDS (61 aa)) are interaction with CTNNB1-A. 4 disordered regions span residues 1 to 77 (MPQL…EKPR), 182 to 212 (GTPPGHLSPEIDPKTGIPRPPHPSELSPYYP), 390 to 473 (WSAR…SLTT), and 488 to 514 (ASKSPSSSSLSGHLPSPVGSPLLSRPI). Composition is skewed to basic and acidic residues over residues 17–32 (ELIRFKDEGEQEEKSP) and 52–77 (SENHSSDSDSEVERRPPPRETFEKPR). The segment at 109–311 (LGGITCPMVP…SPNLSMKSNV (203 aa)) is interaction with AES and TLE4-A. Residues 323–391 (IKKPLNAFML…LHSQLYPSWS (69 aa)) constitute a DNA-binding region (HMG box). Over residues 406–415 (KQSPEMENYT) the composition is skewed to basic and acidic residues. Residues 407–550 (QSPEMENYTK…PLPLVARSSD (144 aa)) are interaction with CTBP-B. A compositionally biased stretch (low complexity) spans 444-455 (SPATPSAALASP).

Belongs to the TCF/LEF family. In terms of assembly, interacts with csnk1e, ctnnb1-A, ctbp-B, dact1-A and gsk3b. May interact with ase and tle4-A. Phosphorylated. Phosphorylation by csnk1e promotes binding to ctnnb1-A while phosphorylation by gsk3b may reverse this effect.

The protein resides in the nucleus. Participates in the Wnt signaling pathway. Binds to DNA and acts as a repressor in the absence of ctnnb1-A and possibly ctnnb1-B, and as an activator in the presence of these proteins. Required early in development for the establishment of the dorsal body axis in response to maternal Wnt signaling. In Xenopus laevis (African clawed frog), this protein is Transcription factor 7-like 1-D (tcf7l1-d).